Consider the following 273-residue polypeptide: WIMGHMVNAIAQIDEFVNLGANSIETDVSFDKNANPEYTYHGIPCDCGRTCTKSEKFNVFLQGLQKATTPGDSKYQEKLVLVVFDLKSSSLYDNQASDAGKKLAKSLLQNYWKNGNNGGRAYIVLSIPNLAHYKLITGFKETLKTEGHPELMEKVGYDFSGNDDIDQVAKAYKKAGVTGHVWQSDGITNCLPRGLDRVKQAVANRDSSNGFINKVYYWTVDKRSTTRGALDAGVDGIMANYPDVIADVLSESAYKSKFRIATYEDNPWETFKN.

The active site involves His5. Mg(2+)-binding residues include Glu25 and Asp27. The active-site Nucleophile is His41. Cystine bridges form between Cys45-Cys51 and Cys47-Cys190. Asp85 serves as a coordination point for Mg(2+).

The protein belongs to the arthropod phospholipase D family. Class II subfamily. Mg(2+) is required as a cofactor. In terms of tissue distribution, expressed by the venom gland.

Its subcellular location is the secreted. The catalysed reaction is an N-(acyl)-sphingosylphosphocholine = an N-(acyl)-sphingosyl-1,3-cyclic phosphate + choline. It catalyses the reaction an N-(acyl)-sphingosylphosphoethanolamine = an N-(acyl)-sphingosyl-1,3-cyclic phosphate + ethanolamine. The enzyme catalyses a 1-acyl-sn-glycero-3-phosphocholine = a 1-acyl-sn-glycero-2,3-cyclic phosphate + choline. It carries out the reaction a 1-acyl-sn-glycero-3-phosphoethanolamine = a 1-acyl-sn-glycero-2,3-cyclic phosphate + ethanolamine. Functionally, dermonecrotic toxins cleave the phosphodiester linkage between the phosphate and headgroup of certain phospholipids (sphingolipid and lysolipid substrates), forming an alcohol (often choline) and a cyclic phosphate. This toxin acts on sphingomyelin (SM). It may also act on ceramide phosphoethanolamine (CPE), lysophosphatidylcholine (LPC) and lysophosphatidylethanolamine (LPE), but not on lysophosphatidylserine (LPS), and lysophosphatidylglycerol (LPG). It acts by transphosphatidylation, releasing exclusively cyclic phosphate products as second products. Induces dermonecrosis, hemolysis, increased vascular permeability, edema, inflammatory response, and platelet aggregation. This chain is Dermonecrotic toxin LdSicTox-alphaIB3aiii, found in Loxosceles deserta (Desert recluse spider).